A 216-amino-acid chain; its full sequence is Probable nicotinate-nucleotide adenylyltransferase (216 aa).

The protein belongs to the NadD family.

It catalyses the reaction nicotinate beta-D-ribonucleotide + ATP + H(+) = deamido-NAD(+) + diphosphate. Its pathway is cofactor biosynthesis; NAD(+) biosynthesis; deamido-NAD(+) from nicotinate D-ribonucleotide: step 1/1. In terms of biological role, catalyzes the reversible adenylation of nicotinate mononucleotide (NaMN) to nicotinic acid adenine dinucleotide (NaAD). This Klebsiella pneumoniae subsp. pneumoniae (strain ATCC 700721 / MGH 78578) protein is Probable nicotinate-nucleotide adenylyltransferase.